The sequence spans 419 residues: MENMRSENFNQGVSMEGVKHAPEMANTNRRALRDIKNIIGAPHQHMAVSKRGLLDKPAAKNQAGHRPMTRKFAATLANQPSSAPLAPIGSERQKRTADSAFHGPADMECTKITSDDLPLPMMSEMDEVMGSELKEIEMEDIEEAAPDIDSCDANNSLAVVEYVDEIYSFYRRSEGLSCVSPNYMLSQNDINEKMRGILIDWLIEVHYKLELLDETLFLTVNIIDRFLARENVVRKKLQLVGVTAMLLACKYEEVSVPVVEDLILICDRAYTRTDILEMERMIVNTLQFDMSVPTPYCFMRRFLKAAQSDKKLELMSFFIIELSLVEYEMLKFQPSMLAAAAIYTAQCTINGFKSWNKCCELHTKYSEEQLMECSKMMVELHQKAGHGKLTGVHRKYSTFRYGCAAKSEPAVFLLKSVAL.

A disordered region spans residues 79–116 (QPSSAPLAPIGSERQKRTADSAFHGPADMECTKITSDD).

The protein belongs to the cyclin family. Cyclin AB subfamily. In terms of assembly, interacts with CDKB2-1. In terms of tissue distribution, expressed in the intercalary meristem and the elongation zone of internodes. Expressed in adventitious roots at all nodes under submergence conditions.

The protein resides in the nucleus. Involved in the control of the cell cycle at the G2/M (mitosis) transition. May associate to CDKB2-1 and activate CDKB2-1 kinase to promote cell division. This is Cyclin-B2-2 (CYCB2-2) from Oryza sativa subsp. indica (Rice).